The primary structure comprises 671 residues: DNA ligase (671 aa).

Residues 34–38 (DAEYD), 83–84 (SL), and glutamate 117 contribute to the NAD(+) site. The active-site N6-AMP-lysine intermediate is the lysine 119. Arginine 140, glutamate 177, lysine 293, and lysine 317 together coordinate NAD(+). Zn(2+)-binding residues include cysteine 411, cysteine 414, cysteine 429, and cysteine 434. A BRCT domain is found at 591–671 (KVGGKFTGKT…EFLQMLEGEQ (81 aa)).

This sequence belongs to the NAD-dependent DNA ligase family. LigA subfamily. The cofactor is Mg(2+). Requires Mn(2+) as cofactor.

It carries out the reaction NAD(+) + (deoxyribonucleotide)n-3'-hydroxyl + 5'-phospho-(deoxyribonucleotide)m = (deoxyribonucleotide)n+m + AMP + beta-nicotinamide D-nucleotide.. Functionally, DNA ligase that catalyzes the formation of phosphodiester linkages between 5'-phosphoryl and 3'-hydroxyl groups in double-stranded DNA using NAD as a coenzyme and as the energy source for the reaction. It is essential for DNA replication and repair of damaged DNA. This Geobacter metallireducens (strain ATCC 53774 / DSM 7210 / GS-15) protein is DNA ligase.